A 366-amino-acid polypeptide reads, in one-letter code: Aldo-keto reductase AFTS1 (366 aa).

Position 75 (Asp-75) interacts with NADP(+). The active-site Proton donor is Tyr-80. Substrate is bound at residue His-172. Residues 202 to 203 (SS), Gln-228, 257 to 267 (GSLASGRLARP), and 329 to 337 (SSVERIDEA) each bind NADP(+).

It belongs to the aldo/keto reductase family.

It functions in the pathway mycotoxin biosynthesis. Its function is as follows. Aldo-keto reductase; part of the gene clusters that mediate the biosynthesis of the host-selective toxins (HSTs) AF-toxins responsible for Alternaria black spot of strawberry disease by the strawberry pathotype. AF-toxin I and III are valine derivatives of 2,3-dyhydroxy-isovaleric acid and 2-hydroxy-isovaleric acid respectively, while AF II is an isoleucine derivative of 2-hydroxy-valeric acid. These derivatives are bound to a 9,10-epoxy-8-hydroxy-9-methyl-decatrienoic acid (EDA) moiety. On cellular level, AF-toxins affect plasma membrane of susceptible cells and cause a sudden increase in loss of K(+) after a few minutes of toxin treatment. The aldo-keto reductase AFTS1 catalyzes the conversion of 2-keto-isovaleric acid (2-KIV) to 2-hydroxy-isovaleric acid (2-HIV) by reduction of its ketone to an alcohol. The acyl-CoA ligase AFT1, the hydrolase AFT2 and the enoyl-CoA hydratases AFT3 and AFT6, but also the polyketide synthase AFT9, the acyl-CoA dehydrogenase AFT10, the cytochrome P450 monooxygenase AFT11 and the oxidoreductase AFT12 are all involved in the biosynthesis of the AK-, AF- and ACT-toxin common EDA structural moiety. The exact function of each enzyme, and of additional enzymes identified within the AF-toxin clusters have still to be determined. This is Aldo-keto reductase AFTS1 from Alternaria alternata (Alternaria rot fungus).